A 454-amino-acid polypeptide reads, in one-letter code: tRNA-2-methylthio-N(6)-dimethylallyladenosine synthase (454 aa).

In terms of domain architecture, MTTase N-terminal spans 6-122 (RRYHITTYGC…LQDLLEQVAS (117 aa)). [4Fe-4S] cluster-binding residues include Cys-15, Cys-51, Cys-85, Cys-157, Cys-161, and Cys-164. The region spanning 143–384 (RDSAVTAWVN…GVCAELRSQR (242 aa)) is the Radical SAM core domain. The region spanning 383–447 (QRYANRIEEV…SFSLTGEPLS (65 aa)) is the TRAM domain.

It belongs to the methylthiotransferase family. MiaB subfamily. Monomer. Requires [4Fe-4S] cluster as cofactor.

It is found in the cytoplasm. The enzyme catalyses N(6)-dimethylallyladenosine(37) in tRNA + (sulfur carrier)-SH + AH2 + 2 S-adenosyl-L-methionine = 2-methylsulfanyl-N(6)-dimethylallyladenosine(37) in tRNA + (sulfur carrier)-H + 5'-deoxyadenosine + L-methionine + A + S-adenosyl-L-homocysteine + 2 H(+). In terms of biological role, catalyzes the methylthiolation of N6-(dimethylallyl)adenosine (i(6)A), leading to the formation of 2-methylthio-N6-(dimethylallyl)adenosine (ms(2)i(6)A) at position 37 in tRNAs that read codons beginning with uridine. In Acaryochloris marina (strain MBIC 11017), this protein is tRNA-2-methylthio-N(6)-dimethylallyladenosine synthase.